The primary structure comprises 144 residues: Maximins 3/H5 (144 aa).

Residues 1-18 (MNFKYIFAVSFLIASAYA) form the signal peptide. Propeptides lie at residues 19 to 43 (RSVQNDEQSLSQRDVLEEESLREIR) and 74 to 123 (TAEE…KEKR). The residue at position 143 (leucine 143) is a Leucine amide.

This sequence belongs to the bombinin family. In terms of tissue distribution, expressed by the skin glands.

The protein localises to the secreted. Functionally, maximin-3 shows antibacterial activity against both Gram-positive and Gram-negative bacteria. It also shows antimicrobial activity against the fungus C.albicans, but not against A.flavus nor P.uticale. It has little hemolytic activity. It possess a significant cytotoxicity against tumor cell lines. It possess a significant anti-HIV activity. It shows high spermicidal activity. In terms of biological role, maximin-H5 shows antibacterial activity only against the Gram-positive bacteria S.aureus. The other bacterial and fungal strains tested were resistant to it. The presence of metal ions, like Zn(2+) and Mg(2+), did not increase its antimicrobial potency. Does not show hemolytic activity (in a concentration up to 80 uM). The polypeptide is Maximins 3/H5 (Bombina maxima (Giant fire-bellied toad)).